Consider the following 237-residue polypeptide: Probable transcriptional regulatory protein Exig_1693 (237 aa).

It belongs to the TACO1 family. YeeN subfamily.

The protein resides in the cytoplasm. The protein is Probable transcriptional regulatory protein Exig_1693 of Exiguobacterium sibiricum (strain DSM 17290 / CCUG 55495 / CIP 109462 / JCM 13490 / 255-15).